A 275-amino-acid chain; its full sequence is MLLLLSAVAFVSATAVQSGVVSQPTTPIPILPGQPMGGMANGCTNKKLDGVEIMRRNMVECQKRNAEATKAMVERANEKAVETFNKEVSKGPQKESGQCIEKAVQGTDRCILAGIIDKAVNKRKYRISDVENSTSLYRGDKLIALIVNVDYGLQPIIKPKKKKSKIMANLPQPKREMYFNQIGQLVGAKGTFPQDNKDECKPCEPKKTVETASERCNLGCELKGTSALISKAIQKKEIKESPKEGDRNTTQEYDGEGSAEDAEGQQPSADGEGLE.

The first 18 residues, 1 to 18, serve as a signal peptide directing secretion; it reads MLLLLSAVAFVSATAVQS. 2 N-linked (GlcNAc...) asparagine glycosylation sites follow: Asn132 and Asn248. The tract at residues 233 to 275 is disordered; sequence IQKKEIKESPKEGDRNTTQEYDGEGSAEDAEGQQPSADGEGLE. Residues 234–249 show a composition bias toward basic and acidic residues; sequence QKKEIKESPKEGDRNT. Over residues 253-263 the composition is skewed to acidic residues; that stretch reads YDGEGSAEDAE.

It is found in the spore polar tube. Functionally, involved in formation of a polar tube through which the infectious agent is passed on to the host cell. The polypeptide is Polar tube protein 2 (PTP2) (Encephalitozoon intestinalis (Microsporidian parasite)).